We begin with the raw amino-acid sequence, 1641 residues long: Alpha-2-macroglobulin (1641 aa).

Residues 1-31 (MRDRVAMMLRPLVRGWIPRAVLLLTVAFSFG) form the signal peptide. The N-palmitoyl cysteine moiety is linked to residue Cys32. A lipid anchor (S-diacylglycerol cysteine) is attached at Cys32. The segment at residues 1166 to 1169 (CAEQ) is a cross-link (isoglutamyl cysteine thioester (Cys-Gln)).

This sequence belongs to the protease inhibitor I39 (alpha-2-macroglobulin) family. Bacterial alpha-2-macroglobulin subfamily.

It is found in the cell membrane. In terms of biological role, protects the bacterial cell from host peptidases. The polypeptide is Alpha-2-macroglobulin (Xylella fastidiosa (strain Temecula1 / ATCC 700964)).